Reading from the N-terminus, the 185-residue chain is Peptidyl-tRNA hydrolase (185 aa).

Y14 contributes to the tRNA binding site. Catalysis depends on H19, which acts as the Proton acceptor. TRNA-binding residues include Y64, N66, and N112.

It belongs to the PTH family. In terms of assembly, monomer.

It is found in the cytoplasm. It carries out the reaction an N-acyl-L-alpha-aminoacyl-tRNA + H2O = an N-acyl-L-amino acid + a tRNA + H(+). Hydrolyzes ribosome-free peptidyl-tRNAs (with 1 or more amino acids incorporated), which drop off the ribosome during protein synthesis, or as a result of ribosome stalling. In terms of biological role, catalyzes the release of premature peptidyl moieties from peptidyl-tRNA molecules trapped in stalled 50S ribosomal subunits, and thus maintains levels of free tRNAs and 50S ribosomes. The protein is Peptidyl-tRNA hydrolase of Ligilactobacillus salivarius (strain UCC118) (Lactobacillus salivarius).